Here is a 231-residue protein sequence, read N- to C-terminus: ATP phosphoribosyltransferase (231 aa).

This sequence belongs to the ATP phosphoribosyltransferase family. Short subfamily. Heteromultimer composed of HisG and HisZ subunits.

It localises to the cytoplasm. It carries out the reaction 1-(5-phospho-beta-D-ribosyl)-ATP + diphosphate = 5-phospho-alpha-D-ribose 1-diphosphate + ATP. The protein operates within amino-acid biosynthesis; L-histidine biosynthesis; L-histidine from 5-phospho-alpha-D-ribose 1-diphosphate: step 1/9. Catalyzes the condensation of ATP and 5-phosphoribose 1-diphosphate to form N'-(5'-phosphoribosyl)-ATP (PR-ATP). Has a crucial role in the pathway because the rate of histidine biosynthesis seems to be controlled primarily by regulation of HisG enzymatic activity. The chain is ATP phosphoribosyltransferase (hisG) from Rhizobium etli (strain ATCC 51251 / DSM 11541 / JCM 21823 / NBRC 15573 / CFN 42).